The chain runs to 77 residues: U8-lycotoxin-Ls1o (77 aa).

The signal sequence occupies residues M1–A20. Positions Q21–K26 are excised as a propeptide.

This sequence belongs to the neurotoxin 19 (CSTX) family. 08 (U8-Lctx) subfamily. Contains 4 disulfide bonds. In terms of tissue distribution, expressed by the venom gland.

Its subcellular location is the secreted. The protein is U8-lycotoxin-Ls1o of Lycosa singoriensis (Wolf spider).